Reading from the N-terminus, the 224-residue chain is MIKLENDWDELLKDEFNQPYYLKLRQFLKNEYQTKRIFPDMYDIFNALKHTAYKDVKVVILGQDPYHGPGQAHGLSFSVQKGVQIPPSLQNIYLELHNDLNCEIPNNGYLIPWADQGVLLLNTVLTVRAGQANSHRGQGWELLTNRIIEMINQKEEPVVFLLWGNNAKEKLQLLTNPKHIAFTSVHPSPLSASRGFMGCKHFSKTNHFLEQNGIKPIDWQIPSI.

D64 (proton acceptor) is an active-site residue.

It belongs to the uracil-DNA glycosylase (UDG) superfamily. UNG family.

It localises to the cytoplasm. The catalysed reaction is Hydrolyzes single-stranded DNA or mismatched double-stranded DNA and polynucleotides, releasing free uracil.. Functionally, excises uracil residues from the DNA which can arise as a result of misincorporation of dUMP residues by DNA polymerase or due to deamination of cytosine. The protein is Uracil-DNA glycosylase 2 of Listeria innocua serovar 6a (strain ATCC BAA-680 / CLIP 11262).